A 31-amino-acid polypeptide reads, in one-letter code: Cytochrome b6-f complex subunit 6 (31 aa).

A helical membrane pass occupies residues 4 to 24; it reads ITSYFGFLLAVLIITSSLFIG.

The protein belongs to the PetL family. In terms of assembly, the 4 large subunits of the cytochrome b6-f complex are cytochrome b6, subunit IV (17 kDa polypeptide, PetD), cytochrome f and the Rieske protein, while the 4 small subunits are PetG, PetL, PetM and PetN. The complex functions as a dimer.

Its subcellular location is the plastid. It is found in the chloroplast thylakoid membrane. Functionally, component of the cytochrome b6-f complex, which mediates electron transfer between photosystem II (PSII) and photosystem I (PSI), cyclic electron flow around PSI, and state transitions. PetL is important for photoautotrophic growth as well as for electron transfer efficiency and stability of the cytochrome b6-f complex. In Phaseolus vulgaris (Kidney bean), this protein is Cytochrome b6-f complex subunit 6.